We begin with the raw amino-acid sequence, 250 residues long: 23S rRNA (guanine(2535)-N(1))-methyltransferase (250 aa).

The catalysed reaction is guanosine(2535) in 23S rRNA + S-adenosyl-L-methionine = N(1)-methylguanosine(2535) in 23S rRNA + S-adenosyl-L-homocysteine + H(+). Its function is as follows. Specifically methylates the guanine-2535 in 23S ribosomal RNA. Confers resistance to antibiotic avilamycin, an orthosomycin antibiotic. This Streptomyces viridochromogenes protein is 23S rRNA (guanine(2535)-N(1))-methyltransferase (aviRa).